The primary structure comprises 100 residues: Integration host factor subunit alpha (100 aa).

A disordered region spans residues 53 to 72 (FQLRDKPQRPGRNPKTGEEV).

This sequence belongs to the bacterial histone-like protein family. Heterodimer of an alpha and a beta chain.

Functionally, this protein is one of the two subunits of integration host factor, a specific DNA-binding protein that functions in genetic recombination as well as in transcriptional and translational control. This chain is Integration host factor subunit alpha, found in Neisseria meningitidis serogroup C (strain 053442).